We begin with the raw amino-acid sequence, 94 residues long: Elongation factor 1-beta (94 aa).

The protein belongs to the EF-1-beta/EF-1-delta family.

Its function is as follows. Promotes the exchange of GDP for GTP in EF-1-alpha/GDP, thus allowing the regeneration of EF-1-alpha/GTP that could then be used to form the ternary complex EF-1-alpha/GTP/AAtRNA. The sequence is that of Elongation factor 1-beta from Ignicoccus hospitalis (strain KIN4/I / DSM 18386 / JCM 14125).